The sequence spans 373 residues: Putative F-box/kelch-repeat protein At5g24040 (373 aa).

Residues 2 to 50 (VKWSELPPEILHLISLKIDNPFDLIHFRSVCSFWRSSSLLKFRHMTSLR) form the F-box domain. Kelch repeat units follow at residues 165-207 (NEYM…PFKG) and 262-308 (YDFH…CTFS).

This Arabidopsis thaliana (Mouse-ear cress) protein is Putative F-box/kelch-repeat protein At5g24040.